The sequence spans 517 residues: Endoglucanase A (517 aa).

Positions 1–25 are cleaved as a signal peptide; it reads MKRSLLKTCSIIAGATIIFSSLSIS. Catalysis depends on Glu-185, which acts as the Proton donor. Glu-309 acts as the Nucleophile in catalysis. Over residues 382–392 the composition is skewed to basic and acidic residues; sequence HPEATEDDKPS. Positions 382–424 are disordered; sequence HPEATEDDKPSTDVTNPDSGNTKPDSGNTNPGTETTTPTDNEK. A compositionally biased stretch (polar residues) spans 393–407; it reads TDVTNPDSGNTKPDS. Residues 408–420 show a composition bias toward low complexity; sequence GNTNPGTETTTPT. One can recognise a CBM2 domain in the interval 416 to 517; that stretch reads TTTPTDNEKI…VISNFEYKFD (102 aa).

The protein belongs to the glycosyl hydrolase 5 (cellulase A) family.

The enzyme catalyses Endohydrolysis of (1-&gt;4)-beta-D-glucosidic linkages in cellulose, lichenin and cereal beta-D-glucans.. Its function is as follows. Hydrolyzes barley beta-glucan, lichenan, carboxymethylcellulose and xylan. It shows preferential activity against the larger cellooligosaccharides (cellohexaose and cellopentaose); cellotetraose is the smallest substrate degraded completely. The sequence is that of Endoglucanase A (celA) from Clostridium longisporum.